Reading from the N-terminus, the 868-residue chain is Leucine--tRNA ligase (868 aa).

A 'HIGH' region motif is present at residues 42–52 (PYPSGKLHMGH). Positions 627 to 631 (KMAKS) match the 'KMSKS' region motif. Lys630 is an ATP binding site.

It belongs to the class-I aminoacyl-tRNA synthetase family.

The protein resides in the cytoplasm. It carries out the reaction tRNA(Leu) + L-leucine + ATP = L-leucyl-tRNA(Leu) + AMP + diphosphate. This is Leucine--tRNA ligase from Pseudomonas fluorescens (strain ATCC BAA-477 / NRRL B-23932 / Pf-5).